Consider the following 281-residue polypeptide: MSKPTIAFLGATGGCINACLAHTLQTGYHAVALARTPSKLTALLRTQNIDQETLDSRLRIVTGDATDPEAVKSTLLLQPGFPTDPTTSASSPTPTLVSHIISGIGATGNFRGWCFEFDQPHICEEATRALLTALRNIYATYPEFMLPANVKSRPLLTVLSGMGVDPSQKQMDVPFLLRRVYHGLLHVPHADKWVMEEMLAKREAREFFRGVITVRPGSLLTGDHMLGSGYGYEKVRVGTEREEPSVGWTIPRADVGEWVFREVVVMGGGRWVDEKVTLTCW.

The protein belongs to the avfA family.

It functions in the pathway secondary metabolite biosynthesis. In terms of biological role, oxidase; part of the gene cluster that mediates the biosynthesis of pyranonigrins, a family of antioxidative compounds. The first step of pyranonigrins biosynthesis is performed by the hybrid PKS-NRPS synthetase that condenses 6 malonyl-CoA units to an acetyl starter unit, to form a 1,3,5-trioxotetradecane-6,8-dienyl-ACP. The enoyl reductase (ER) domain of pynA is likely to be functional during the first two rounds of polyketide chain extension, to generate the saturated C-C bonds of the alkyl side chain. PynA subsequently forms the amide bond between the acyl chain and L-serine. Although pynA has a terminal reductase domain, it appears to require the thioesterase pynI for the release of the straight-chain intermediate from pynA via the formation of a tetramic acid pyranonigrin J. The methyltransferase pynC then coverts pyranonigrin J to pyranonigrin I via N-methylation. The FAD-dependent monooxygenase pynG catalyzes an epoxidation-mediated cyclization to form the dihydro-gamma-pyrone moiety, followed by pynD-catalyzed oxidation of the alcohol to the ketone and enolization to yield the characteristic tetramic acid-fused gamma-pyrone core of pyranonigrin H. Pyranonigrin H is substrate of pynH for dehydration-mediated exo-methylene formation from the serine side chain to produce pyranonigrin E, before the oxidase pynE reduces the exo-methylene of pyranonigrin E into a pendant methyl to form pyranonigrin G. The FAD-linked oxidoreductase pynB performs the reverse reaction and converts pyranonigrin G back to pyranonigrin E. The polypeptide is Oxidase pynE (Aspergillus niger (strain ATCC MYA-4892 / CBS 513.88 / FGSC A1513)).